The following is a 445-amino-acid chain: MQVPKNNIYTVSRLNGEVRQILEGQLGKIWLNGEISNFSTPSSGHWYLTLKDHFSQIRCAMFKGRNQSVSFKPVNGQQVIVKGAISVYEPRGDYQLLIESMLPAGDGLLAQQFEALKMKLAALGLFAADTKRALPKNIQRIGVITSPTGAAIRDVLHVLARRDPSIEVIIYPTQVQGENADINICQAINIANQRLEVDVLLLTRGGGSLEDLWCFNSEALAHTIYNSALPIVSAVGHEVDTTISDYVADVRAPTPSAGAELLSQDSDNKSQRLATVLARLKQSASHYQLKQERRLSLLEHRLQRLDPKRTLQQFEQRFDEMQLRLEAALTNKLHGLSRRQQQLASRLEQQSPKHKLALEANRLSYLATRLQDAMQDKLSHSGQRIKYVAHQLETVSPLATLSRGYSITTDVNGAVITSASQISLGDTITTQLSNERLMSTVTRLP.

It belongs to the XseA family. As to quaternary structure, heterooligomer composed of large and small subunits.

It localises to the cytoplasm. It carries out the reaction Exonucleolytic cleavage in either 5'- to 3'- or 3'- to 5'-direction to yield nucleoside 5'-phosphates.. Bidirectionally degrades single-stranded DNA into large acid-insoluble oligonucleotides, which are then degraded further into small acid-soluble oligonucleotides. This Shewanella oneidensis (strain ATCC 700550 / JCM 31522 / CIP 106686 / LMG 19005 / NCIMB 14063 / MR-1) protein is Exodeoxyribonuclease 7 large subunit.